A 176-amino-acid polypeptide reads, in one-letter code: Large ribosomal subunit protein bL19 (176 aa).

The protein belongs to the bacterial ribosomal protein bL19 family.

Its function is as follows. This protein is located at the 30S-50S ribosomal subunit interface and may play a role in the structure and function of the aminoacyl-tRNA binding site. This chain is Large ribosomal subunit protein bL19, found in Sinorhizobium fredii (strain NBRC 101917 / NGR234).